The sequence spans 271 residues: Protein FANTASTIC FOUR 1 (271 aa).

Positions 114–168 constitute an FAF domain; it reads NSFPPPLNSVNGFNNSRMVKSYKEDGRLVVQAIRVCSPPRCFVSERREGRLRLCL. Residues 174 to 255 form a disordered region; that stretch reads NSQDAEEEFE…KRRCNENGCE (82 aa). The segment covering 177–224 has biased composition (acidic residues); that stretch reads DAEEEFEEEDEDDQYDAEEEEEEEEEEEEEEEEEEEEEEEEEEEDEEG. Over residues 237-247 the composition is skewed to basic residues; the sequence is GNKKVSNRPKR.

Belongs to the fantastic four family. In terms of tissue distribution, expressed in the shoot apex, stamens, anthers and young siliques. Detected in provascular and vascular tissue.

In terms of biological role, able to repress WUS when constitutively overexpressed, but have no effect on CLV3. The chain is Protein FANTASTIC FOUR 1 (FAF1) from Arabidopsis thaliana (Mouse-ear cress).